We begin with the raw amino-acid sequence, 208 residues long: Ribosomal RNA small subunit methyltransferase G (208 aa).

S-adenosyl-L-methionine is bound by residues G76, L81, 127-128, and R142; that span reads VE.

Belongs to the methyltransferase superfamily. RNA methyltransferase RsmG family.

The protein resides in the cytoplasm. The catalysed reaction is guanosine(527) in 16S rRNA + S-adenosyl-L-methionine = N(7)-methylguanosine(527) in 16S rRNA + S-adenosyl-L-homocysteine. Functionally, specifically methylates the N7 position of guanine in position 527 of 16S rRNA. The chain is Ribosomal RNA small subunit methyltransferase G from Legionella pneumophila subsp. pneumophila (strain Philadelphia 1 / ATCC 33152 / DSM 7513).